The following is a 190-amino-acid chain: Potassium-transporting ATPase KdpC subunit (190 aa).

The helical transmembrane segment at 13 to 33 (VGFLLLTLVCGVIYPGVVTII) threads the bilayer.

Belongs to the KdpC family. In terms of assembly, the system is composed of three essential subunits: KdpA, KdpB and KdpC.

It localises to the cell membrane. Part of the high-affinity ATP-driven potassium transport (or Kdp) system, which catalyzes the hydrolysis of ATP coupled with the electrogenic transport of potassium into the cytoplasm. This subunit acts as a catalytic chaperone that increases the ATP-binding affinity of the ATP-hydrolyzing subunit KdpB by the formation of a transient KdpB/KdpC/ATP ternary complex. The polypeptide is Potassium-transporting ATPase KdpC subunit (Listeria innocua serovar 6a (strain ATCC BAA-680 / CLIP 11262)).